A 219-amino-acid polypeptide reads, in one-letter code: Transmembrane emp24 domain-containing protein 10 (219 aa).

The first 31 residues, 1–31 (MSGLSGPPTRRGPFPLALLLLFLLGPSLVLA), serve as a signal peptide directing secretion. The interval 1–142 (MSGLSGPPTR…KNYEEIAKVE (142 aa)) is required for interaction with STX17. The Lumenal portion of the chain corresponds to 32 to 185 (ISFHLPINSR…RDTNESTNTR (154 aa)). A GOLD domain is found at 41–193 (RKCLREEIHK…TRVLYFSIFS (153 aa)). Arg171 and Arg176 each carry dimethylated arginine. A glycan (N-linked (GlcNAc...) asparagine) is linked at Asn179. The helical transmembrane segment at 186-206 (VLYFSIFSMFCLIGLATWQVF) threads the bilayer. The segment at 204–219 (QVFYLRRFFKAKKLIE) is interaction with COPG1. Residues 207–219 (YLRRFFKAKKLIE) are Cytoplasmic-facing. Residues 207–219 (YLRRFFKAKKLIE) form an interaction with ARF1 and IL1B region. Residues 211–212 (FF) carry the COPII vesicle coat-binding motif. The COPI vesicle coat-binding signature appears at 211-219 (FFKAKKLIE).

This sequence belongs to the EMP24/GP25L family. Predominantly dimeric and to a lesser extent monomeric in the ER. Monomer and dimer in ERGIC and cis-Golgi network. Forms homooligomer (via GOLD domain); the assembly is promoted by direct binding with leaderless cargos and may form a protein channel that facilitates cargo entry into the ERGIC. Forms heterooligomeric complexes with other members of the p24 family such as TMED2, TMED7 and TMED9. Interacts (via GOLD domain) with TMED2 (via GOLD domain); the complex is required for export of TMED10 from the ER to the cis-Golgi network; the complex is proposed to be involved in cis-Golgi network dynamics and / or biogenesis. Associates with the COPI vesicle coat subunits (coatomer). Tetramerization of the cytoplasmic domain at the Golgi membrane in vitro; the complex is proposed to interact with COPI coatomer and induce budding of the vesicles. Interacts with COPG1; the interaction involves TMED10 homodimer. Interacts with ARF1 (GDP-bound); the interaction probably involves a TMED10 oligomer. Interacts with SEC23A, SEC24B, SEC24C and SEC24D components of the coat protein complex II/COPII, indicative of an association of TMED10 with the COPII vesicle coat. Interacts with CD59. Interacts with MPPE1/PGAP5; the complex might recruit and sort GPI-anchored proteins to the ER-exit site, or the interaction might lead to recycling of PGAP5 between the ER and the Golgi. Interacts with F2LR1/PAR2. Interacts with KDELR2/ERD2; the interaction is disrupted by KDELR2 ligand. Found in a complex composed at least of SURF4, TMED2 and TMED10. Associates with the presenilin-dependent gamma-secretase complex. Interacts with STX17; the interaction is direct. Interacts with IL-1; the interaction is direct. Interacts with RAB21 (active GTP-bound form); the interaction is indirect and regulates TMED10 abundance and localization at the Golgi.

It localises to the endoplasmic reticulum membrane. The protein localises to the endoplasmic reticulum-Golgi intermediate compartment membrane. Its subcellular location is the golgi apparatus membrane. It is found in the golgi apparatus. The protein resides in the cis-Golgi network membrane. It localises to the trans-Golgi network membrane. The protein localises to the cytoplasmic vesicle. Its subcellular location is the secretory vesicle membrane. It is found in the cell membrane. The protein resides in the melanosome. Cargo receptor involved in protein vesicular trafficking and quality control in the endoplasmic reticulum (ER) and Golgi. The p24 protein family is a group of transmembrane proteins that bind coat protein complex I/COPI and coat protein complex II/COPII involved in vesicular trafficking between the membranes. Acts at the lumenal side for incorporation of secretory cargo molecules into transport vesicles and involved in vesicle coat formation at the cytoplasmic side. Mainly functions in the early secretory pathway and cycles between the ER, ER-Golgi intermediate compartment (ERGIC) and Golgi, mediating cargo transport through COPI and COPII-coated vesicles. In COPII vesicle-mediated anterograde transport, involved in the transport of GPI-anchored proteins by acting together with TMED2 as their cargo receptor; the function specifically implies SEC24C and SEC24D of the COPII vesicle coat and lipid raft-like microdomains of the ER. Recognizes GPI anchors structural remodeled in the ER by the GPI inositol-deacylase/PGAP1 and the metallophosphoesterase MPPE1/PGAP5. In COPI vesicle-mediated retrograde transport, involved in the biogenesis of COPI vesicles and vesicle coat recruitment. Involved in trafficking of amyloid beta A4 protein and soluble APP-beta release (independent from the modulation of gamma-secretase activity). Involved in the KDELR2-mediated retrograde transport of the toxin A subunit (CTX-A-K63)together with COPI and the COOH terminus of KDELR2. On Golgi membranes, acts as a primary receptor for ARF1-GDP, a GTP-binding protein involved in COPI-vesicle formation. Increases coatomer-dependent GTPase-activating activity of ARFGAP2 which mediates the hydrolysis of ARF1-bound GTP and therefore modulates protein trafficking from the Golgi apparatus. Involved in the exocytic trafficking of G protein-coupled receptors F2LR1/PAR2 (trypsin and tryspin-like enzyme receptor), OPRM1 (opioid receptor) and P2RY4 (UTD and UDP receptor) from the Golgi to the plasma membrane, thus contributing to receptor resensitization. In addition to its cargo receptor activity, may also act as a protein channel after oligomerization, facilitating the post-translational entry of leaderless cytoplasmic cargo into the ERGIC. Involved in the translocation into ERGIC, the vesicle entry and the secretion of leaderless cargos (lacking the secretion signal sequence), including the mature form of interleukin 1/IL-1 family members, the alpha-crystallin B chain HSPB5, the carbohydrate-binding proteins galectin-1/LGALS1 and galectin-3/LGALS3, the microtubule-associated protein Tau/MAPT, and the annexin A1/ANXA1; the translocation process is dependent on cargo protein unfolding and enhanced by chaperones HSP90AB1 and HSP90B1/GRP9. Could also associates with the presenilin-dependent gamma-secretase complex in order to regulate gamma-cleavages of the amyloid beta A4 protein to yield amyloid-beta 40/Abeta40. The chain is Transmembrane emp24 domain-containing protein 10 (TMED10) from Pongo abelii (Sumatran orangutan).